Here is a 492-residue protein sequence, read N- to C-terminus: Serine incorporator 4 (492 aa).

The next 10 helical transmembrane spans lie at 59 to 79 (YILL…KTVV), 113 to 133 (AVYR…VLLV), 148 to 168 (SFWS…FCIP), 179 to 199 (IGIC…TAFA), 219 to 239 (GVSL…VLLF), 254 to 274 (LLSL…APCI), 281 to 301 (SGLL…FSAL), 330 to 350 (IPDT…VLFA), 421 to 441 (GFHF…TNWF), and 464 to 484 (VASC…PLLA).

This sequence belongs to the TDE1 family.

It localises to the membrane. In terms of biological role, incorporates a polar amino acid serine into membranes and facilitates the synthesis of two serine-derived lipids, phosphatidylserine and sphingolipids. This Mus musculus (Mouse) protein is Serine incorporator 4 (Serinc4).